The following is a 544-amino-acid chain: Glucans biosynthesis protein G (544 aa).

The first 34 residues, 1–34, serve as a signal peptide directing secretion; it reads MVSLLRCQSSKPYSSLICSLALGVAFALSGTAYA.

This sequence belongs to the OpgD/OpgG family.

The protein resides in the periplasm. It functions in the pathway glycan metabolism; osmoregulated periplasmic glucan (OPG) biosynthesis. Its function is as follows. Involved in the biosynthesis of osmoregulated periplasmic glucans (OPGs). This chain is Glucans biosynthesis protein G, found in Shewanella putrefaciens (strain CN-32 / ATCC BAA-453).